The following is a 308-amino-acid chain: Cytochrome b (308 aa).

4 helical membrane passes run 1–21 (FGSL…LLAM), 45–66 (WLIR…YFHI), 81–101 (WNIG…GYVL), and 146–166 (FFAL…VHLT). Residues His-51 and His-65 each contribute to the heme b site. Residues His-150 and His-164 each contribute to the heme b site. His-169 lines the a ubiquinone pocket. 3 consecutive transmembrane segments (helical) span residues 194–214 (TKDI…ALFS), 256–276 (LGGV…PLLH), and 288–308 (LSQI…WVGS).

The protein belongs to the cytochrome b family. As to quaternary structure, the cytochrome bc1 complex contains 11 subunits: 3 respiratory subunits (MT-CYB, CYC1 and UQCRFS1), 2 core proteins (UQCRC1 and UQCRC2) and 6 low-molecular weight proteins (UQCRH/QCR6, UQCRB/QCR7, UQCRQ/QCR8, UQCR10/QCR9, UQCR11/QCR10 and a cleavage product of UQCRFS1). This cytochrome bc1 complex then forms a dimer. Requires heme b as cofactor.

The protein localises to the mitochondrion inner membrane. In terms of biological role, component of the ubiquinol-cytochrome c reductase complex (complex III or cytochrome b-c1 complex) that is part of the mitochondrial respiratory chain. The b-c1 complex mediates electron transfer from ubiquinol to cytochrome c. Contributes to the generation of a proton gradient across the mitochondrial membrane that is then used for ATP synthesis. The sequence is that of Cytochrome b (MT-CYB) from Baeolophus inornatus (Oak titmouse).